The primary structure comprises 204 residues: Protease (204 aa).

Catalysis depends on residues H54, D71, and C122.

Belongs to the peptidase C5 family. In terms of assembly, interacts with protease cofactor pVI-C; this interaction is necessary for protease activation.

The protein resides in the virion. The protein localises to the host nucleus. The catalysed reaction is Cleaves proteins of the adenovirus and its host cell at two consensus sites: -Yaa-Xaa-Gly-Gly-|-Xaa- and -Yaa-Xaa-Gly-Xaa-|-Gly- (in which Yaa is Met, Ile or Leu, and Xaa is any amino acid).. Its activity is regulated as follows. Requires DNA and protease cofactor for maximal activation. Inside nascent virions, becomes partially activated by binding to the viral DNA, allowing it to cleave the cofactor that binds to the protease and fully activates it. Actin, like the viral protease cofactor, seems to act as a cofactor in the cleavage of cytokeratin 18 and of actin itself. In terms of biological role, cleaves viral precursor proteins (pTP, pIIIa, pVI, pVII, pVIII, and pX) inside newly assembled particles giving rise to mature virions. Protease complexed to its cofactor slides along the viral DNA to specifically locate and cleave the viral precursors. Mature virions have a weakened organization compared to the unmature virions, thereby facilitating subsequent uncoating. Without maturation, the particle lacks infectivity and is unable to uncoat. Late in adenovirus infection, in the cytoplasm, may participate in the cytoskeleton destruction. Cleaves host cell cytoskeletal keratins K7 and K18. In Bos taurus (Bovine), this protein is Protease.